The primary structure comprises 214 residues: Adenylate kinase (214 aa).

10-15 (GVGKGT) lines the ATP pocket. The NMP stretch occupies residues 30–59 (STGDILRAAVKELTPMGAKAKGYMDSGALV). AMP is bound by residues Thr-31, Arg-36, 57 to 59 (ALV), 85 to 88 (GFPR), and Gln-92. The segment at 126-163 (GRRACANCGAGYHVDFAPSKVAGVCDACSGQLVQREDD) is LID. An ATP-binding site is contributed by Arg-127. Residues Cys-130, Cys-133, Cys-150, and Cys-153 each contribute to the Zn(2+) site. Residues Arg-160 and Arg-171 each coordinate AMP. Gly-199 is a binding site for ATP.

Belongs to the adenylate kinase family. Monomer.

Its subcellular location is the cytoplasm. It catalyses the reaction AMP + ATP = 2 ADP. It participates in purine metabolism; AMP biosynthesis via salvage pathway; AMP from ADP: step 1/1. Functionally, catalyzes the reversible transfer of the terminal phosphate group between ATP and AMP. Plays an important role in cellular energy homeostasis and in adenine nucleotide metabolism. The chain is Adenylate kinase from Citrifermentans bemidjiense (strain ATCC BAA-1014 / DSM 16622 / JCM 12645 / Bem) (Geobacter bemidjiensis).